A 587-amino-acid polypeptide reads, in one-letter code: 5-aminolevulinate synthase, erythroid-specific, mitochondrial (587 aa).

The N-terminal 49 residues, 1-49 (MVAAAMLLRSCPVLSQGPTGLLGKVAKTYQFLFSIGRCPILATQGPTCS), are a transit peptide targeting the mitochondrion. Residue Arg-163 coordinates succinyl-CoA. Residues Cys-258 and Phe-259 each coordinate pyridoxal 5'-phosphate. Succinyl-CoA contacts are provided by Ser-280 and Lys-299. The pyridoxal 5'-phosphate site is built by Ser-332, His-360, and Thr-388. Lys-391 is an active-site residue. Residue Lys-391 is modified to N6-(pyridoxal phosphate)lysine. Thr-420 and Thr-421 together coordinate pyridoxal 5'-phosphate. Thr-508 serves as a coordination point for succinyl-CoA.

This sequence belongs to the class-II pyridoxal-phosphate-dependent aminotransferase family. Homodimer. Interacts with SUCLA2. Requires pyridoxal 5'-phosphate as cofactor. Predomnantly expressed in erythroid cells.

Its subcellular location is the mitochondrion inner membrane. The protein localises to the mitochondrion. It carries out the reaction succinyl-CoA + glycine + H(+) = 5-aminolevulinate + CO2 + CoA. The protein operates within porphyrin-containing compound metabolism; protoporphyrin-IX biosynthesis; 5-aminolevulinate from glycine: step 1/1. Functionally, catalyzes the pyridoxal 5'-phosphate (PLP)-dependent condensation of succinyl-CoA and glycine to form aminolevulinic acid (ALA), with CoA and CO2 as by-products. Contributes significantly to heme formation during erythropoiesis. The protein is 5-aminolevulinate synthase, erythroid-specific, mitochondrial (Alas2) of Mus musculus (Mouse).